We begin with the raw amino-acid sequence, 328 residues long: Cell cycle control protein 50A (328 aa).

Residues 1–28 are disordered; sequence MAMNYSAKDEVDGGPTGPPGGAAKTRRP. Ala2 carries the N-acetylalanine modification. The interval 2 to 48 is required for ATPase and aminophospholipid flippase activity; sequence AMNYSAKDEVDGGPTGPPGGAAKTRRPDNTAFKQQRLPAWQPILTAG. At 2-49 the chain is on the cytoplasmic side; sequence AMNYSAKDEVDGGPTGPPGGAAKTRRPDNTAFKQQRLPAWQPILTAGT. The interaction with ATP8A2 stretch occupies residues 49–315; the sequence is TVLPTFFIIG…LGVVLLVINH (267 aa). A helical transmembrane segment spans residues 50–70; sequence VLPTFFIIGLIFIPIGIGIFV. Over 71–292 the chain is Exoplasmic loop; the sequence is TSNNIREIEG…SWMGGKNPFL (222 aa). Positions 102 to 125 are disordered; the sequence is RDDSQLNGDPSALLNPSKECEPYR. A disulfide bond links Cys121 and Cys135. N-linked (GlcNAc...) asparagine glycans are attached at residues Asn144 and Asn261. The chain crosses the membrane as a helical span at residues 293 to 313; the sequence is GIAYITIGSISFLLGVVLLVI. The Cytoplasmic segment spans residues 314 to 328; the sequence is NHKYRNSSNTADITI.

This sequence belongs to the CDC50/LEM3 family. Component of various P4-ATPase flippase complexes which consists of a catalytic alpha subunit and an accessory beta subunit. Interacts with ATP8A1 to form a flippase complex; this complex forms an intermediate phosphoenzyme. Interacts with ATP8A2 to form a flippase complex. TP8B1:TMEM30A and ATP8B2:TMEM30A flippase complexes have been shown to form intermediate phosphoenzymes in vitro. Interacts with alpha subunits ATP8A1, ATP8B1, ATP8B2, ATP8B4, ATP10A, ATP10B, ATP10D, ATP11A, ATP11B and ATP11C. N-glycosylated. Contains high mannose-type oligosaccharides.

It localises to the membrane. It is found in the golgi apparatus. The protein localises to the cytoplasmic vesicle. The protein resides in the secretory vesicle membrane. Its subcellular location is the apical cell membrane. It localises to the photoreceptor inner segment. It is found in the cell projection. The protein localises to the cilium. The protein resides in the photoreceptor outer segment. Its function is as follows. Accessory component of a P4-ATPase flippase complex which catalyzes the hydrolysis of ATP coupled to the transport of aminophospholipids from the outer to the inner leaflet of various membranes and ensures the maintenance of asymmetric distribution of phospholipids. Phospholipid translocation also seems to be implicated in vesicle formation and in uptake of lipid signaling molecules. The beta subunit may assist in binding of the phospholipid substrate. Required for the proper folding, assembly and ER to Golgi exit of the ATP8A2:TMEM30A flippase complex. ATP8A2:TMEM30A may be involved in regulation of neurite outgrowth, and, reconstituted to liposomes, predomiminantly transports phosphatidylserine (PS) and to a lesser extent phosphatidylethanolamine (PE). The ATP8A1:TMEM30A flippase complex seems to play a role in regulation of cell migration probably involving flippase-mediated translocation of phosphatidylethanolamine (PE) at the plasma membrane. Required for the formation of the ATP8A2, ATP8B1 and ATP8B2 P-type ATPAse intermediate phosphoenzymes. Involved in uptake of platelet-activating factor (PAF). Can also mediate the export of alpha subunits ATP8A1, ATP8B1, ATP8B2, ATP8B4, ATP10A, ATP10B, ATP10D, ATP11A, ATP11B and ATP11C from ER to other membrane localizations. This is Cell cycle control protein 50A from Rattus norvegicus (Rat).